An 84-amino-acid polypeptide reads, in one-letter code: RQC P-site tRNA stabilizing factor (84 aa).

Positions 1–64 (MRIDKFLQSV…IEEYTILQIP (64 aa)) constitute an S4 RNA-binding domain.

Belongs to the RqcP family. Associates with stalled 50S ribosomal subunits. Binds to RqcH, 23S rRNA and the P-site tRNA. Does not require RqcH for association with 50S subunits.

Key component of the ribosome quality control system (RQC), a ribosome-associated complex that mediates the extraction of incompletely synthesized nascent chains from stalled ribosomes and their subsequent degradation. RqcH recruits Ala-charged tRNA, and with RqcP directs the elongation of stalled nascent chains on 50S ribosomal subunits, leading to non-templated C-terminal alanine extensions (Ala tail). The Ala tail promotes nascent chain degradation. RqcP is associated with the translocation-like movement of the peptidyl-tRNA from the A-site into the P-site. The protein is RQC P-site tRNA stabilizing factor of Helicobacter pylori (strain ATCC 700392 / 26695) (Campylobacter pylori).